Reading from the N-terminus, the 105-residue chain is Synaptic plasticity regulator PANTS (105 aa).

Belongs to the UPF0545 family. In terms of assembly, interacts with RTN4 isoform A/Nogo-A; the interaction results in enhanced RTN4-mediated inhibition of AMPA receptor clustering. Also interacts with NCAM1, RANBP2 and CCT8. Post-translationally, rapidly degraded by proteolysis following neuronal stimulation, resulting in increased AMPA receptor clustering. In terms of tissue distribution, in the postnatal brain, expressed diffusely throughout the hippocampus at a low level at 8 weeks (at protein level). At 16 weeks, strongly expressed in the stratum lucidum of the hippocampus (at protein level). In developing and aging brain, expression is strongest in hippocampus, especially in areas CA3 and CA2, throughout the dorsoventral axis.

It is found in the synapse. The protein localises to the synaptic cleft. Negatively regulates long-term potentiation and modulates adult synaptic plasticity. Stabilizes the interaction of RTN4 isoform A/Nogo-A with its receptors, inhibiting clustering of postsynaptic AMPA receptors at synaptic sites. Upon neuronal stimulation, degraded at synapses, reducing RTN4 signaling and allowing AMPA receptor clustering at individual synapses. The protein is Synaptic plasticity regulator PANTS of Mus musculus (Mouse).